The following is a 462-amino-acid chain: Putative zinc metalloprotease RSc1411 (462 aa).

The chain crosses the membrane as a helical span at residues 1-21; it reads MLTVLAFVFAIAVLIVVHELG. His-18 contacts Zn(2+). Glu-19 is an active-site residue. His-22 lines the Zn(2+) pocket. The helical transmembrane segment at 102–124 threads the bilayer; that stretch reads FAIVAAGPVFNFLLAIALYALLA. The PDZ domain maps to 201 to 283; that stretch reads TVRLRELPSA…MPEQNASIDI (83 aa). The next 2 helical transmembrane spans lie at 386 to 406 and 430 to 450; these read FVAF…LPVP and WQAV…SLAL.

The protein belongs to the peptidase M50B family. Requires Zn(2+) as cofactor.

It localises to the cell inner membrane. The polypeptide is Putative zinc metalloprotease RSc1411 (Ralstonia nicotianae (strain ATCC BAA-1114 / GMI1000) (Ralstonia solanacearum)).